The sequence spans 96 residues: Co-chaperonin GroES (96 aa).

Belongs to the GroES chaperonin family. Heptamer of 7 subunits arranged in a ring. Interacts with the chaperonin GroEL.

The protein resides in the cytoplasm. In terms of biological role, together with the chaperonin GroEL, plays an essential role in assisting protein folding. The GroEL-GroES system forms a nano-cage that allows encapsulation of the non-native substrate proteins and provides a physical environment optimized to promote and accelerate protein folding. GroES binds to the apical surface of the GroEL ring, thereby capping the opening of the GroEL channel. This is Co-chaperonin GroES from Halorhodospira halophila (strain DSM 244 / SL1) (Ectothiorhodospira halophila (strain DSM 244 / SL1)).